We begin with the raw amino-acid sequence, 99 residues long: Aspartyl/glutamyl-tRNA(Asn/Gln) amidotransferase subunit C (99 aa).

This sequence belongs to the GatC family. Heterotrimer of A, B and C subunits.

The catalysed reaction is L-glutamyl-tRNA(Gln) + L-glutamine + ATP + H2O = L-glutaminyl-tRNA(Gln) + L-glutamate + ADP + phosphate + H(+). It carries out the reaction L-aspartyl-tRNA(Asn) + L-glutamine + ATP + H2O = L-asparaginyl-tRNA(Asn) + L-glutamate + ADP + phosphate + 2 H(+). Its function is as follows. Allows the formation of correctly charged Asn-tRNA(Asn) or Gln-tRNA(Gln) through the transamidation of misacylated Asp-tRNA(Asn) or Glu-tRNA(Gln) in organisms which lack either or both of asparaginyl-tRNA or glutaminyl-tRNA synthetases. The reaction takes place in the presence of glutamine and ATP through an activated phospho-Asp-tRNA(Asn) or phospho-Glu-tRNA(Gln). This chain is Aspartyl/glutamyl-tRNA(Asn/Gln) amidotransferase subunit C, found in Mycolicibacterium smegmatis (strain ATCC 700084 / mc(2)155) (Mycobacterium smegmatis).